A 258-amino-acid chain; its full sequence is 14-3-3-like protein 16R (258 aa).

Residues 238–258 (DMQDDGTDEIKEAAPKPDNNE) are disordered. Residues 245 to 258 (DEIKEAAPKPDNNE) are compositionally biased toward basic and acidic residues.

Belongs to the 14-3-3 family.

The chain is 14-3-3-like protein 16R from Solanum tuberosum (Potato).